Consider the following 586-residue polypeptide: Proline--tRNA ligase (586 aa).

Belongs to the class-II aminoacyl-tRNA synthetase family. ProS type 1 subfamily. Homodimer.

The protein localises to the cytoplasm. The enzyme catalyses tRNA(Pro) + L-proline + ATP = L-prolyl-tRNA(Pro) + AMP + diphosphate. Catalyzes the attachment of proline to tRNA(Pro) in a two-step reaction: proline is first activated by ATP to form Pro-AMP and then transferred to the acceptor end of tRNA(Pro). As ProRS can inadvertently accommodate and process non-cognate amino acids such as alanine and cysteine, to avoid such errors it has two additional distinct editing activities against alanine. One activity is designated as 'pretransfer' editing and involves the tRNA(Pro)-independent hydrolysis of activated Ala-AMP. The other activity is designated 'posttransfer' editing and involves deacylation of mischarged Ala-tRNA(Pro). The misacylated Cys-tRNA(Pro) is not edited by ProRS. The protein is Proline--tRNA ligase of Leptospira biflexa serovar Patoc (strain Patoc 1 / Ames).